A 577-amino-acid polypeptide reads, in one-letter code: Arginine--tRNA ligase (577 aa).

The 'HIGH' region motif lies at 122-132; the sequence is PNVAKEMHVGH.

This sequence belongs to the class-I aminoacyl-tRNA synthetase family. Monomer.

The protein localises to the cytoplasm. It catalyses the reaction tRNA(Arg) + L-arginine + ATP = L-arginyl-tRNA(Arg) + AMP + diphosphate. The sequence is that of Arginine--tRNA ligase from Salmonella schwarzengrund (strain CVM19633).